The chain runs to 705 residues: MGQEKHVFTIDWAGRTLTVETGQLAKQANGAVMIRYGDTAVLSTATASKEPKPLDFFPLTVNYEERLYAVGKIPGGFIKREGRPSEKAVLASRLIDRPIRPLFADGFRNEVQVISIVMSVDQNCSSEMAAMFGSSLALSVSDIPFEGPIAGVTVGRIDDQFIINPTVDQLEKSDINLVVAGTKDAINMVEAGADEVPEEIMLEAIMFGHEEIKRLIAFQEEIVAAVGKEKSEIKLFEIDEELNEKVKALAEEDLLKAIQVHEKHAREDAINEVKNAVVAKFEDEEHDEDTIKQVKQILSKLVKNEVRRLITEEKVRPDGRGVDQIRPLSSEVGLLPRTHGSGLFTRGQTQALSVCTLGALGDVQILDGLGVEESKRFMHHYNFPQFSVGETGPMRGPGRREIGHGALGERALEPVIPSEKDFPYTVRLVSEVLESNGSTSQASICASTLAMMDAGVPIKAPVAGIAMGLVKSGEHYTVLTDIQGMEDALGDMDFKVAGTEKGVTALQMDIKIEGLSREILEEALQQAKKGRMEILNSMLATLSESRKELSRYAPKILTMTINPDKIRDVIGPSGKQINKIIEETGVKIDIEQDGTIFISSTDESGNQKAKKIIEDLVREVEVGQLYLGKVKRIEKFGAFVEIFSGKDGLVHISELALERVGKVEDVVKIGDEILVKVTEIDKQGRVNLSRKAVLREEKEKEEQQS.

Positions 487 and 493 each coordinate Mg(2+). The KH domain occupies 554–613 (PKILTMTINPDKIRDVIGPSGKQINKIIEETGVKIDIEQDGTIFISSTDESGNQKAKKII). The S1 motif domain occupies 623 to 691 (GQLYLGKVKR…KQGRVNLSRK (69 aa)).

This sequence belongs to the polyribonucleotide nucleotidyltransferase family. Homodimer. Component of a possible RNA degradosome complex composed of rny, rnjA, rnjB, pnp, pfkA and eno (although rnjA and rnjB's presence is unclear). RNA helicase CshA may also be a member of this complex. Requires Mg(2+) as cofactor.

The protein localises to the cytoplasm. The enzyme catalyses RNA(n+1) + phosphate = RNA(n) + a ribonucleoside 5'-diphosphate. Functionally, involved in mRNA degradation. Catalyzes the phosphorolysis of single-stranded polyribonucleotides processively in the 3'- to 5'-direction. Necessary for competence development in Bacillus subtilis. May be necessary for modification of the srfA transcript (stabilization or translation activation). Involved in processing precursor type I toxin-antitoxin RNAs antitoxin SR4 and SR5 RNAs to their mature forms. This Bacillus subtilis (strain 168) protein is Polyribonucleotide nucleotidyltransferase.